A 56-amino-acid polypeptide reads, in one-letter code: Large ribosomal subunit protein bL32 (56 aa).

Positions 1–16 are enriched in basic residues; the sequence is MAVQKSKKSRSRRGMR. Positions 1 to 38 are disordered; that stretch reads MAVQKSKKSRSRRGMRRSHDAVTPENLSVDPVSGETHR.

This sequence belongs to the bacterial ribosomal protein bL32 family.

The sequence is that of Large ribosomal subunit protein bL32 from Colwellia psychrerythraea (strain 34H / ATCC BAA-681) (Vibrio psychroerythus).